The primary structure comprises 962 residues: Phosphatidylinositol 3,4,5-trisphosphate 3-phosphatase and dual-specificity protein phosphatase daf-18 (962 aa).

Residues M1–Y37 are disordered. The region spanning C58–E230 is the Phosphatase tensin-type domain. C169 serves as the catalytic Phosphocysteine intermediate. Residues L234–C530 form the C2 tensin-type domain. 2 disordered regions span residues D382 to V416 and I689 to D731. Positions R392–P403 are enriched in basic and acidic residues. A compositionally biased stretch (low complexity) spans T692 to T704. A compositionally biased stretch (basic and acidic residues) spans K706 to T720.

It belongs to the PTEN phosphatase protein family. As to quaternary structure, interacts (via C-terminus) with vab-1 (via kinase domain); the interaction is independent of vab-1 kinase activity. Interacts with arr-1 and mpz-1; the interaction may inhibit daf-18. Interacts (via C-terminus) with daf-2 (via kinase domain). Post-translationally, phosphorylated by vab-1 on tyrosine residues which may promote daf-18 degradation. Expressed in embryo, larvae and in adult germline (at protein level). Expressed at equal levels in the 6 vulva precursor cells (VPCs) of L2 larvae and in the descendant cells of the induced VPCs (at protein level). Expressed in the uterus (at protein level). Expressed in the Z2/Z3 germline precursors, oocytes, several amphid neurons and weakly in the nerve cord (at protein level).

Its subcellular location is the perikaryon. It localises to the cell membrane. The protein resides in the cell projection. The protein localises to the axon. It is found in the dendrite. Its subcellular location is the cytoplasm. It localises to the nucleus. It catalyses the reaction a 1,2-diacyl-sn-glycero-3-phospho-(1D-myo-inositol-3,4,5-trisphosphate) + H2O = a 1,2-diacyl-sn-glycero-3-phospho-(1D-myo-inositol-4,5-bisphosphate) + phosphate. The catalysed reaction is O-phospho-L-seryl-[protein] + H2O = L-seryl-[protein] + phosphate. It carries out the reaction O-phospho-L-threonyl-[protein] + H2O = L-threonyl-[protein] + phosphate. The enzyme catalyses O-phospho-L-tyrosyl-[protein] + H2O = L-tyrosyl-[protein] + phosphate. It catalyses the reaction 1,2-dioctanoyl-sn-glycero-3-phospho-(1D-myo-inositol-3,4,5-trisphosphate) + H2O = 1,2-dioctanoyl-sn-glycero-3-phospho-(1D-myo-inositol-4,5-bisphosphate) + phosphate. The catalysed reaction is 1,2-dihexadecanoyl-sn-glycero-3-phospho-(1D-myo-inositol-3,4,5-trisphosphate) + H2O = 1,2-dihexadecanoyl-sn-glycero-3-phospho-(1D-myo-inositol-4,5-bisphosphate) + phosphate. Functionally, acts as a dual-specificity protein phosphatase, dephosphorylating tyrosine-, serine- and threonine-phosphorylated proteins. Also acts as a lipid phosphatase, removing the phosphate in the D3 position of the inositol ring from phosphatidylinositol 3,4,5-trisphosphate. By dephosphorylating PtdIns(3,4,5)P3 antagonizes PtdIns(3,4,5)P3 production by age-1/PI3K and thus, negatively regulates daf-2-mediated processes including dauer formation, longevity, fat metabolism, chemotaxis towards salt, thermotolerance and axon guidance. Similarly, promotes apoptosis during embryonic development by suppressing the recruitment of the prosurvival kinases akt-1/2 to the plasma membrane. In addition, regulates Z2/Z3 germline precursor cell cycle by maintaining them arrested at the G2 stage and by controlling their growth during L1 diapause. After sperm depletion in larvae and adult hermaphrodites, promotes germline stem cell quiescence and oocyte accumulation. By dephosphorylating ephrin-like receptor vab-1 on tyrosine residues, negatively regulates oocyte maturation downstream of vab-1 and upstream of mpk-1, independently of daf-2. Plays a role in postembryonic muscle arm extensions. Required for neurite outgrowth during AIY interneuron embryonic development. Mainly independently of daf-2, negatively regulates vulva induction probably by inhibiting mpk-1 phosphorylation. Both lipid and protein phosphatase activities are required for the regulation of vulva induction. Plays a role in gonad and germline development following the L1 diapause. The polypeptide is Phosphatidylinositol 3,4,5-trisphosphate 3-phosphatase and dual-specificity protein phosphatase daf-18 (Caenorhabditis elegans).